The following is a 214-amino-acid chain: Quinolone resistance pentapeptide repeat protein QnrB96 (214 aa).

Pentapeptide repeat domains are found at residues 23-103 and 116-189; these read STFH…SFMN and ITNT…VRGV.

This sequence belongs to the pentapeptide repeat protein family.

Confers reduced sensitivity to the fluoroquinolone antibiotic ciprofloxacin (five-fold increase in minimum inhibitory concentration) when expressed in E.coli. The protein is Quinolone resistance pentapeptide repeat protein QnrB96 of Scandinavium goeteborgense.